Reading from the N-terminus, the 192-residue chain is NADH dehydrogenase [ubiquinone] iron-sulfur protein 3 (192 aa).

Belongs to the complex I 30 kDa subunit family. As to quaternary structure, complex I is composed of about 45 different subunits. This is a component of the iron-sulfur (IP) fragment of the enzyme.

It localises to the mitochondrion inner membrane. The catalysed reaction is a ubiquinone + NADH + 5 H(+)(in) = a ubiquinol + NAD(+) + 4 H(+)(out). Core subunit of the mitochondrial membrane respiratory chain NADH dehydrogenase (Complex I) that is believed to belong to the minimal assembly required for catalysis. Complex I functions in the transfer of electrons from NADH to the respiratory chain. The immediate electron acceptor for the enzyme is believed to be ubiquinone. In Beta vulgaris (Sugar beet), this protein is NADH dehydrogenase [ubiquinone] iron-sulfur protein 3 (NAD9).